A 156-amino-acid polypeptide reads, in one-letter code: Small ribosomal subunit protein uS7 (156 aa).

This sequence belongs to the universal ribosomal protein uS7 family. Part of the 30S ribosomal subunit. Contacts proteins S9 and S11.

In terms of biological role, one of the primary rRNA binding proteins, it binds directly to 16S rRNA where it nucleates assembly of the head domain of the 30S subunit. Is located at the subunit interface close to the decoding center, probably blocks exit of the E-site tRNA. The sequence is that of Small ribosomal subunit protein uS7 from Bifidobacterium longum subsp. infantis (strain ATCC 15697 / DSM 20088 / JCM 1222 / NCTC 11817 / S12).